We begin with the raw amino-acid sequence, 35 residues long: Ranatuerin-2SPb (35 aa).

An intrachain disulfide couples C28 to C33.

Expressed by the skin glands.

It is found in the secreted. Functionally, antibacterial activity against Gram-positive bacterium S.aureus. Shows no detectable hemolytic activity towards human erythrocytes. The sequence is that of Ranatuerin-2SPb from Lithobates septentrionalis (Mink frog).